The chain runs to 443 residues: Deoxyguanosinetriphosphate triphosphohydrolase-like protein (443 aa).

An HD domain is found at 61-246 (RLTHSLEVAC…MEAADDICYG (186 aa)).

It belongs to the dGTPase family. Type 3 subfamily.

This Pseudomonas aeruginosa (strain LESB58) protein is Deoxyguanosinetriphosphate triphosphohydrolase-like protein.